The sequence spans 436 residues: GTPase Obg (436 aa).

The Obg domain maps to 2–160; the sequence is SMFLDTAKIK…RELQLELKIL (159 aa). In terms of domain architecture, OBG-type G spans 161–338; the sequence is ADVGLVGFPS…LLDATAELLD (178 aa). GTP is bound by residues 167 to 174, 192 to 196, 214 to 217, 284 to 287, and 319 to 321; these read GFPSVGKS, FTTIV, DLPG, NKMD, and SGL. Mg(2+)-binding residues include Ser174 and Thr194. Positions 358-436 constitute an OCT domain; the sequence is GFDEEEKAFE…IGKFEFEFVD (79 aa).

This sequence belongs to the TRAFAC class OBG-HflX-like GTPase superfamily. OBG GTPase family. As to quaternary structure, monomer. Requires Mg(2+) as cofactor.

Its subcellular location is the cytoplasm. Functionally, an essential GTPase which binds GTP, GDP and possibly (p)ppGpp with moderate affinity, with high nucleotide exchange rates and a fairly low GTP hydrolysis rate. Plays a role in control of the cell cycle, stress response, ribosome biogenesis and in those bacteria that undergo differentiation, in morphogenesis control. The protein is GTPase Obg of Streptococcus pneumoniae serotype 2 (strain D39 / NCTC 7466).